A 207-amino-acid polypeptide reads, in one-letter code: MVSLGHVLFVILLPVLLPVAADDPDDQMLSQISLPSSSRSEYDDNDVSKRVFCNGFTGCGGRHRDRSRRQERYGKRLIPVLAKRPFCNSFGCYNGKRSLSGAGPALSTPVDPSRNNKARTMARMLDAAASARHEQQQQLLQQREQRGLESRDPAASGDLSKRLFCNGYGGCRGGKRTLYSPWLERMNEVADDRSARNALCTRLGWRE.

Positions 1–21 (MVSLGHVLFVILLPVLLPVAA) are cleaved as a signal peptide. Positions 22-48 (DDPDDQMLSQISLPSSSRSEYDDNDVS) are excised as a propeptide. A disulfide bond links Cys53 and Cys59. Gly60 carries the post-translational modification Glycine amide. Residues 63–82 (HRDRSRRQERYGKRLIPVLA) constitute a propeptide that is removed on maturation. Cys87 and Cys92 are disulfide-bonded. At Asn94 the chain carries Asparagine amide. Positions 98–160 (SLSGAGPALS…RDPAASGDLS (63 aa)) are excised as a propeptide. The disordered stretch occupies residues 131–155 (ARHEQQQQLLQQREQRGLESRDPAA). A compositionally biased stretch (basic and acidic residues) spans 143 to 152 (REQRGLESRD). Cys165 and Cys171 are joined by a disulfide. Gly173 carries the post-translational modification Glycine amide. Positions 177–207 (TLYSPWLERMNEVADDRSARNALCTRLGWRE) are excised as a propeptide.

In terms of tissue distribution, expressed by the venom duct.

The protein localises to the secreted. In terms of biological role, in contrast to other members of the CCAP family which are cardio-accelerators, conoCAP-a decreases the heart frequency in Drosophila larvae (26%), rats and zebrafish embryos. It also reduces the blood pressure in rats. It decreases systolic calcium in ventricular cardiac myocytes, indicating that it may act via impairment of intracellular calcium trafficking. Synthetic conoCAP-b decreases the heart frequency of 23% in Drosophila larvae. Functionally, synthetic conoCAP-c decreases the heart frequency of 12% in Drosophila larvae. This is ConoCAP (conoCAP) from Conus villepinii (Villepin's cone).